A 201-amino-acid polypeptide reads, in one-letter code: Small ribosomal subunit protein uS4 (201 aa).

The disordered stretch occupies residues 1 to 42 (MARYTGPATRKSRRLGVDLVGGDQSFEKRPYPPGQHGRARIK). An S4 RNA-binding domain is found at 91-157 (SRLDNVVYRA…LPFQIARETA (67 aa)).

This sequence belongs to the universal ribosomal protein uS4 family. Part of the 30S ribosomal subunit. Contacts protein S5. The interaction surface between S4 and S5 is involved in control of translational fidelity.

Functionally, one of the primary rRNA binding proteins, it binds directly to 16S rRNA where it nucleates assembly of the body of the 30S subunit. With S5 and S12 plays an important role in translational accuracy. The sequence is that of Small ribosomal subunit protein uS4 from Mycolicibacterium smegmatis (strain ATCC 700084 / mc(2)155) (Mycobacterium smegmatis).